The primary structure comprises 267 residues: Undecaprenyl-diphosphatase 1 (267 aa).

The next 8 membrane-spanning stretches (helical) occupy residues 6-26, 41-60, 83-103, 109-129, 142-162, 185-205, 217-237, and 244-264; these read VLVV…AAGL, AALS…IYFW, HLLL…WLVL, LVGQ…LWGC, MSWV…VPGV, FSML…FWGL, LLMA…GMMA, and FVPF…LVYF.

This sequence belongs to the UppP family.

Its subcellular location is the cell inner membrane. It catalyses the reaction di-trans,octa-cis-undecaprenyl diphosphate + H2O = di-trans,octa-cis-undecaprenyl phosphate + phosphate + H(+). Its function is as follows. Catalyzes the dephosphorylation of undecaprenyl diphosphate (UPP). Confers resistance to bacitracin. The polypeptide is Undecaprenyl-diphosphatase 1 (Paramagnetospirillum magneticum (strain ATCC 700264 / AMB-1) (Magnetospirillum magneticum)).